Reading from the N-terminus, the 245-residue chain is 2,3-bisphosphoglycerate-dependent phosphoglycerate mutase (245 aa).

Residues 8 to 15 (RHGQSLWN), 21 to 22 (TG), Arg-60, 87 to 90 (ERHY), Lys-98, 114 to 115 (RR), and 183 to 184 (GN) each bind substrate. Residue His-9 is the Tele-phosphohistidine intermediate of the active site. Glu-87 serves as the catalytic Proton donor/acceptor.

It belongs to the phosphoglycerate mutase family. BPG-dependent PGAM subfamily.

The catalysed reaction is (2R)-2-phosphoglycerate = (2R)-3-phosphoglycerate. Its pathway is carbohydrate degradation; glycolysis; pyruvate from D-glyceraldehyde 3-phosphate: step 3/5. Catalyzes the interconversion of 2-phosphoglycerate and 3-phosphoglycerate. The protein is 2,3-bisphosphoglycerate-dependent phosphoglycerate mutase of Bacillus cereus (strain ATCC 14579 / DSM 31 / CCUG 7414 / JCM 2152 / NBRC 15305 / NCIMB 9373 / NCTC 2599 / NRRL B-3711).